The chain runs to 496 residues: MEEQREALRKIIKTLAVKNEEIQSFIYSLKQMLLNVEANSAKVQEDLEAEFQSLFSLLEELKEGMLMKIKQDRASRTYELQNQLAACTRALESSEELLETANQTLQAMDSEDFPQAAKQIKDGVTMAPAFRLSLKAKVSDNMSHLMVDFAQERQMLQALKFLPVPSAPVIDLAESLVADNCVTLVWRMPDEDSKIDHYVLEYRRTNFEGPPRLKEDQPWMVIEGIRQTEYTLTGLKFDMKYMNFRVKACNKAVAGEFSEPVTLETPAFMFRLDASTSHQNLRVDDLSVEWDAMGGKVQDIKAREKDGKGRTASPINSPARGTPSPKRMPSGRGGRDRFTAESYTVLGDTLIDGGEHYWEVRYEPDSKAFGVGVAYRSLGRFEQLGKTAASWCLHVNNWLQVSFTAKHANKVKVLDAPVPDCLGVHCDFHQGLLSFYNARTKQVLHTFKTRFTQPLLPAFTVWCGSFQVTTGLQVPSAVRCLQKRGSATSSSNTSLT.

Residues 4-99 (QREALRKIIK…ALESSEELLE (96 aa)) adopt a coiled-coil conformation. The 58-residue stretch at 105–162 (LQAMDSEDFPQAAKQIKDGVTMAPAFRLSLKAKVSDNMSHLMVDFAQERQMLQALKFL) folds into the COS domain. The Fibronectin type-III domain occupies 164–268 (VPSAPVIDLA…EPVTLETPAF (105 aa)). Residues 268–477 (FMFRLDASTS…VTTGLQVPSA (210 aa)) enclose the B30.2/SPRY domain. The tract at residues 301-336 (KAREKDGKGRTASPINSPARGTPSPKRMPSGRGGRD) is disordered. Omega-N-methylarginine occurs at positions 310 and 320.

Oligomerization is required for binding to microtubules. As to expression, highly expressed in brain tissues, including cerebellum, cerebral cortex, medulla, occipital pole, frontal lobe, temporal lobe and putamen. Lower expression in spinal cord.

Its subcellular location is the cytoplasm. It is found in the cytoskeleton. The protein localises to the microtubule organizing center. It localises to the centrosome. The protein resides in the nucleus. Its subcellular location is the cleavage furrow. Functionally, may be involved in microtubule organization and stabilization. This Homo sapiens (Human) protein is Fibronectin type III and SPRY domain-containing protein 1 (FSD1).